The following is a 332-amino-acid chain: Glycerol-3-phosphate dehydrogenase [NAD(P)+] (332 aa).

NADPH-binding residues include tryptophan 11, arginine 30, and lysine 108. Positions 108, 137, and 139 each coordinate sn-glycerol 3-phosphate. An NADPH-binding site is contributed by alanine 141. Residues lysine 192, aspartate 245, serine 255, arginine 256, and asparagine 257 each coordinate sn-glycerol 3-phosphate. Lysine 192 serves as the catalytic Proton acceptor. Residue arginine 256 participates in NADPH binding. NADPH contacts are provided by valine 280 and glutamate 282.

The protein belongs to the NAD-dependent glycerol-3-phosphate dehydrogenase family.

It is found in the cytoplasm. It carries out the reaction sn-glycerol 3-phosphate + NAD(+) = dihydroxyacetone phosphate + NADH + H(+). It catalyses the reaction sn-glycerol 3-phosphate + NADP(+) = dihydroxyacetone phosphate + NADPH + H(+). Its pathway is membrane lipid metabolism; glycerophospholipid metabolism. Functionally, catalyzes the reduction of the glycolytic intermediate dihydroxyacetone phosphate (DHAP) to sn-glycerol 3-phosphate (G3P), the key precursor for phospholipid synthesis. This chain is Glycerol-3-phosphate dehydrogenase [NAD(P)+], found in Burkholderia pseudomallei (strain 1710b).